The following is a 734-amino-acid chain: Photosystem I P700 chlorophyll a apoprotein A2 (734 aa).

The next 8 helical transmembrane spans lie at 46 to 69, 135 to 158, 175 to 199, 273 to 291, 330 to 353, 369 to 395, 417 to 439, and 517 to 535; these read IFAS…FHVA, LYTG…LHLQ, LNHH…HVAI, IAHH…GHMY, IHFQ…QHMY, AALY…IFFI, AIKS…LYVH, and FLVH…LILV. [4Fe-4S] cluster contacts are provided by Cys-559 and Cys-568. The next 2 helical transmembrane spans lie at 575 to 596 and 643 to 665; these read AFYL…YWHW and LSVW…MFLI. Chlorophyll a contacts are provided by His-654, Met-662, and Tyr-670. Residue Trp-671 participates in phylloquinone binding. Residues 707–727 traverse the membrane as a helical segment; the sequence is LVGLAHFSVGYIFTYAAFLIA.

It belongs to the PsaA/PsaB family. In terms of assembly, the PsaA/B heterodimer binds the P700 chlorophyll special pair and subsequent electron acceptors. PSI consists of a core antenna complex that captures photons, and an electron transfer chain that converts photonic excitation into a charge separation. The eukaryotic PSI reaction center is composed of at least 11 subunits. P700 is a chlorophyll a/chlorophyll a' dimer, A0 is one or more chlorophyll a, A1 is one or both phylloquinones and FX is a shared 4Fe-4S iron-sulfur center. is required as a cofactor.

The protein localises to the plastid. The protein resides in the chloroplast thylakoid membrane. It carries out the reaction reduced [plastocyanin] + hnu + oxidized [2Fe-2S]-[ferredoxin] = oxidized [plastocyanin] + reduced [2Fe-2S]-[ferredoxin]. Functionally, psaA and PsaB bind P700, the primary electron donor of photosystem I (PSI), as well as the electron acceptors A0, A1 and FX. PSI is a plastocyanin-ferredoxin oxidoreductase, converting photonic excitation into a charge separation, which transfers an electron from the donor P700 chlorophyll pair to the spectroscopically characterized acceptors A0, A1, FX, FA and FB in turn. Oxidized P700 is reduced on the lumenal side of the thylakoid membrane by plastocyanin. This Drimys granadensis protein is Photosystem I P700 chlorophyll a apoprotein A2.